Here is a 43-residue protein sequence, read N- to C-terminus: Protein PsbN (43 aa).

A helical transmembrane segment spans residues 7–27 (LIVFIASLLLGVTGYSVYTAF).

This sequence belongs to the PsbN family.

Its subcellular location is the plastid. The protein resides in the chloroplast thylakoid membrane. In terms of biological role, may play a role in photosystem I and II biogenesis. The protein is Protein PsbN of Rhodomonas salina (Cryptomonas salina).